We begin with the raw amino-acid sequence, 116 residues long: Early 4 ORF3 protein (116 aa).

The protein belongs to the adenoviridae E4 ORF3 family. As to quaternary structure, homodimer. Multimerizes through C-terminus tail by reciprocal or nonreciprocal interactions. Interacts with host PML isoform 2 C-terminal disordered region. Interacts with E1B-55k; this interaction is necessary for E1B 55 kDa protein to localize to the nuclear matrix fraction of the cell. May interact with host TRIM24, CREBBP, EP300, PRKDC and the MRN complex MRE11/RAD50/NBS1; these interactions may happen through nuclear bodies complexes.

It is found in the host nucleus. Its function is as follows. Forms a multivalent network in host nucleus that inhibits nuclear bodies and prevents antiviral cellular activities. The network is made of multimerized dimers and surrounds adenovirus replication centers and nucleolus. Plays a role in splicing of the major late transcript. Prevents viral genome concatemer formation. This chain is Early 4 ORF3 protein, found in Human adenovirus C serotype 2 (HAdV-2).